A 182-amino-acid chain; its full sequence is Ribulose bisphosphate carboxylase small subunit, chloroplastic 3 (182 aa).

Residues 1–41 (MASIMMNKSVVLSKECAKPLASPKVTLNKRGFATTIATKNR) constitute a chloroplast transit peptide.

The protein belongs to the RuBisCO small chain family. Heterohexadecamer of 8 large and 8 small subunits.

Its subcellular location is the plastid. The protein localises to the chloroplast. In terms of biological role, ruBisCO catalyzes two reactions: the carboxylation of D-ribulose 1,5-bisphosphate, the primary event in carbon dioxide fixation, as well as the oxidative fragmentation of the pentose substrate. Both reactions occur simultaneously and in competition at the same active site. Although the small subunit is not catalytic it is essential for maximal activity. The chain is Ribulose bisphosphate carboxylase small subunit, chloroplastic 3 from Acetabularia acetabulum (Mermaid's wine glass).